We begin with the raw amino-acid sequence, 344 residues long: Phenylalanine--tRNA ligase alpha subunit (344 aa).

E256 is a Mg(2+) binding site.

Belongs to the class-II aminoacyl-tRNA synthetase family. Phe-tRNA synthetase alpha subunit type 1 subfamily. Tetramer of two alpha and two beta subunits. Mg(2+) serves as cofactor.

It localises to the cytoplasm. The enzyme catalyses tRNA(Phe) + L-phenylalanine + ATP = L-phenylalanyl-tRNA(Phe) + AMP + diphosphate + H(+). The sequence is that of Phenylalanine--tRNA ligase alpha subunit from Geobacillus thermodenitrificans (strain NG80-2).